The chain runs to 353 residues: D-alanine--D-alanine ligase (353 aa).

Residues 141-349 enclose the ATP-grasp domain; sequence KAAFAAAGLS…LPQLVAELVD (209 aa). 176–231 is a binding site for ATP; the sequence is EQELGYPCFVKPANLGSSVGITKANNRDELLAGLHQAAALDPRLLVEQGVNARELE. Asp302, Glu316, and Asn318 together coordinate Mg(2+).

Belongs to the D-alanine--D-alanine ligase family. Requires Mg(2+) as cofactor. Mn(2+) is required as a cofactor.

It is found in the cytoplasm. It catalyses the reaction 2 D-alanine + ATP = D-alanyl-D-alanine + ADP + phosphate + H(+). The protein operates within cell wall biogenesis; peptidoglycan biosynthesis. Its function is as follows. Cell wall formation. This Synechococcus sp. (strain WH7803) protein is D-alanine--D-alanine ligase.